The primary structure comprises 430 residues: tRNA(Ile)-lysidine synthase (430 aa).

21-26 serves as a coordination point for ATP; it reads SGGLDS.

It belongs to the tRNA(Ile)-lysidine synthase family.

It is found in the cytoplasm. It carries out the reaction cytidine(34) in tRNA(Ile2) + L-lysine + ATP = lysidine(34) in tRNA(Ile2) + AMP + diphosphate + H(+). In terms of biological role, ligates lysine onto the cytidine present at position 34 of the AUA codon-specific tRNA(Ile) that contains the anticodon CAU, in an ATP-dependent manner. Cytidine is converted to lysidine, thus changing the amino acid specificity of the tRNA from methionine to isoleucine. This is tRNA(Ile)-lysidine synthase from Salmonella agona (strain SL483).